A 459-amino-acid polypeptide reads, in one-letter code: Exodeoxyribonuclease 7 large subunit (459 aa).

This sequence belongs to the XseA family. In terms of assembly, heterooligomer composed of large and small subunits.

The protein localises to the cytoplasm. The enzyme catalyses Exonucleolytic cleavage in either 5'- to 3'- or 3'- to 5'-direction to yield nucleoside 5'-phosphates.. In terms of biological role, bidirectionally degrades single-stranded DNA into large acid-insoluble oligonucleotides, which are then degraded further into small acid-soluble oligonucleotides. This Yersinia pseudotuberculosis serotype O:3 (strain YPIII) protein is Exodeoxyribonuclease 7 large subunit.